The chain runs to 105 residues: Met repressor (105 aa).

Belongs to the MetJ family. Homodimer.

Its subcellular location is the cytoplasm. This regulatory protein, when combined with SAM (S-adenosylmethionine) represses the expression of the methionine regulon and of enzymes involved in SAM synthesis. This is Met repressor from Yersinia enterocolitica serotype O:8 / biotype 1B (strain NCTC 13174 / 8081).